The chain runs to 475 residues: Ribulose bisphosphate carboxylase large chain (475 aa).

Positions 1–2 (MS) are excised as a propeptide. The residue at position 3 (P3) is an N-acetylproline. K14 is subject to N6,N6,N6-trimethyllysine. Substrate is bound by residues N123 and T173. Residue K175 is the Proton acceptor of the active site. K177 contacts substrate. The Mg(2+) site is built by K201, D203, and E204. K201 bears the N6-carboxylysine mark. H294 acts as the Proton acceptor in catalysis. Substrate is bound by residues R295, H327, and S379.

The protein belongs to the RuBisCO large chain family. Type I subfamily. Heterohexadecamer of 8 large chains and 8 small chains; disulfide-linked. The disulfide link is formed within the large subunit homodimers. Requires Mg(2+) as cofactor. In terms of processing, the disulfide bond which can form in the large chain dimeric partners within the hexadecamer appears to be associated with oxidative stress and protein turnover.

It localises to the plastid. It is found in the chloroplast. It catalyses the reaction 2 (2R)-3-phosphoglycerate + 2 H(+) = D-ribulose 1,5-bisphosphate + CO2 + H2O. The enzyme catalyses D-ribulose 1,5-bisphosphate + O2 = 2-phosphoglycolate + (2R)-3-phosphoglycerate + 2 H(+). Its function is as follows. RuBisCO catalyzes two reactions: the carboxylation of D-ribulose 1,5-bisphosphate, the primary event in carbon dioxide fixation, as well as the oxidative fragmentation of the pentose substrate in the photorespiration process. Both reactions occur simultaneously and in competition at the same active site. This Gossypium hirsutum (Upland cotton) protein is Ribulose bisphosphate carboxylase large chain.